Reading from the N-terminus, the 379-residue chain is Sterol 24-C-methyltransferase erg-4 (379 aa).

It belongs to the class I-like SAM-binding methyltransferase superfamily. Erg6/SMT family.

It catalyses the reaction lanosterol + S-adenosyl-L-methionine = eburicol + S-adenosyl-L-homocysteine + H(+). It participates in steroid metabolism; ergosterol biosynthesis. Catalyzes the methyl transfer from S-adenosyl-methionine to the C-24 of lanosterol to form eburicol. This Neurospora crassa (strain ATCC 24698 / 74-OR23-1A / CBS 708.71 / DSM 1257 / FGSC 987) protein is Sterol 24-C-methyltransferase erg-4.